The sequence spans 359 residues: Putative ankyrin repeat protein R190 (359 aa).

ANK repeat units follow at residues 72-103 (RLME…DFRC), 105-133 (DCVI…DLNR), 142-173 (DEII…SISI), 203-234 (LGNL…DINN), 236-260 (HEYS…YGLI), 261-287 (IHDD…IGHK), and 288-317 (PSKQ…DLSD).

In Acanthamoeba polyphaga (Amoeba), this protein is Putative ankyrin repeat protein R190.